A 114-amino-acid chain; its full sequence is UPF0757 protein YmgG (114 aa).

It belongs to the UPF0757 family.

This chain is UPF0757 protein YmgG, found in Shigella flexneri.